Consider the following 455-residue polypeptide: Fumarate hydratase class II (455 aa).

Residues 96–98 (SGT), 122–125 (HPND), 132–134 (SSN), and threonine 180 each bind substrate. Histidine 181 functions as the Proton donor/acceptor in the catalytic mechanism. The active site involves serine 311. Residues serine 312 and 317–319 (KVN) each bind substrate.

This sequence belongs to the class-II fumarase/aspartase family. Fumarase subfamily. As to quaternary structure, homotetramer.

It localises to the cytoplasm. It carries out the reaction (S)-malate = fumarate + H2O. Its pathway is carbohydrate metabolism; tricarboxylic acid cycle; (S)-malate from fumarate: step 1/1. Its function is as follows. Involved in the TCA cycle. Catalyzes the stereospecific interconversion of fumarate to L-malate. This Listeria monocytogenes serovar 1/2a (strain ATCC BAA-679 / EGD-e) protein is Fumarate hydratase class II.